Reading from the N-terminus, the 335-residue chain is Beta-ketoacyl-[acyl-carrier-protein] synthase III 3 (335 aa).

Residues Cys114 and His256 contribute to the active site. Positions 257–261 (QANHR) are ACP-binding. Asn286 is an active-site residue.

It belongs to the thiolase-like superfamily. FabH family. Homodimer.

It localises to the cytoplasm. The enzyme catalyses malonyl-[ACP] + acetyl-CoA + H(+) = 3-oxobutanoyl-[ACP] + CO2 + CoA. Its pathway is lipid metabolism; fatty acid biosynthesis. Catalyzes the condensation reaction of fatty acid synthesis by the addition to an acyl acceptor of two carbons from malonyl-ACP. Catalyzes the first condensation reaction which initiates fatty acid synthesis and may therefore play a role in governing the total rate of fatty acid production. Possesses both acetoacetyl-ACP synthase and acetyl transacylase activities. Its substrate specificity determines the biosynthesis of branched-chain and/or straight-chain of fatty acids. The protein is Beta-ketoacyl-[acyl-carrier-protein] synthase III 3 of Streptomyces coelicolor (strain ATCC BAA-471 / A3(2) / M145).